The following is a 223-amino-acid chain: Agamous-like MADS-box protein AGL11 (223 aa).

Residues 1 to 61 (MGRGKIEIKR…GRVYEYSNNN (61 aa)) form the MADS-box domain. The 91-residue stretch at 87 to 177 (AQYYQQESAK…RTKIAEVERL (91 aa)) folds into the K-box domain.

As to expression, expressed in flowers and seeds. Expressed in endotesta cell layer of developing seeds.

It localises to the nucleus. Its function is as follows. Probable transcription factor involved in seed development. Plays a role in seed morphogenesis by promoting the correct development of endotesta cell layer, which directs the further development of the seed coat, the endosperm, and consequently the embryo. This Vitis vinifera (Grape) protein is Agamous-like MADS-box protein AGL11.